Consider the following 258-residue polypeptide: MNYSYSFKEYIERFAKKVNSIDSEYFEFSSYIERMRTVFGLLIALICFSNVLCFLFIATWFSTKGFGQHYRALIFTLFIPFVTSLLANIIFINLNRAFREYFKISSKSRSFLVICAFSSLPIVNIWLMLWWVAMIKRFTSNYAFAIFDKYNGLTSGVFIFDFADNVNFEGKLVSFDNTKDTNRDFVHFYSEAKLKRDKITLQTNPIPHERMYVNRMYYQQKLSMGANQNSPSTAFANLKRYVEHKQQKIIKIKQFILT.

Transmembrane regions (helical) follow at residues 38–58, 72–92, and 111–131; these read VFGL…LFIA, ALIF…IIFI, and FLVI…MLWW.

The protein localises to the cell membrane. This is an uncharacterized protein from Mycoplasma pneumoniae (strain ATCC 29342 / M129 / Subtype 1) (Mycoplasmoides pneumoniae).